A 647-amino-acid chain; its full sequence is ATP-binding protein Uup (647 aa).

ABC transporter domains are found at residues 1 to 253 (MALI…RVEA) and 320 to 546 (FEME…AKAK). ATP contacts are provided by residues 36 to 43 (GRNGAGKS) and 352 to 359 (GPNGCGKT). A compositionally biased stretch (basic and acidic residues) spans 545–563 (AKKSEPLKEESAVKNDRTS). Residues 545-569 (AKKSEPLKEESAVKNDRTSKPKSVK) are disordered. The segment at 559-647 (NDRTSKPKSV…EKKNLVEGKA (89 aa)) is C-terminal domain (CTD), binds DNA.

Belongs to the ABC transporter superfamily. ABCF family. Uup subfamily.

It is found in the cytoplasm. The enzyme catalyses ATP + H2O = ADP + phosphate + H(+). In terms of biological role, probably plays a role in ribosome assembly or function. May be involved in resolution of branched DNA intermediates that result from template switching in postreplication gaps. Binds DNA and has ATPase activity. The protein is ATP-binding protein Uup of Haemophilus influenzae (strain ATCC 51907 / DSM 11121 / KW20 / Rd).